A 109-amino-acid chain; its full sequence is Juvenile hormone esterase, isoform A (109 aa).

The protein belongs to the type-B carboxylesterase/lipase family. As to expression, fat body, the site of their biosynthesis, and the hemolymph where it is secreted.

It carries out the reaction juvenile hormone I + H2O = juvenile hormone I carboxylate + methanol + H(+). The catalysed reaction is juvenile hormone III + H2O = juvenile hormone III carboxylate + methanol + H(+). JH esterase plays a crucial role in the decrease of JH activity in lepidopteran insects, by hydrolyzing the methyl ester of JH. It is also involved in the transport of JH. This is Juvenile hormone esterase, isoform A from Trichoplusia ni (Cabbage looper).